Reading from the N-terminus, the 170-residue chain is Adenine phosphoribosyltransferase (170 aa).

It belongs to the purine/pyrimidine phosphoribosyltransferase family. As to quaternary structure, homodimer.

It is found in the cytoplasm. The catalysed reaction is AMP + diphosphate = 5-phospho-alpha-D-ribose 1-diphosphate + adenine. The protein operates within purine metabolism; AMP biosynthesis via salvage pathway; AMP from adenine: step 1/1. In terms of biological role, catalyzes a salvage reaction resulting in the formation of AMP, that is energically less costly than de novo synthesis. This Kosmotoga olearia (strain ATCC BAA-1733 / DSM 21960 / TBF 19.5.1) protein is Adenine phosphoribosyltransferase.